The chain runs to 373 residues: Bifunctional enzyme IspD/IspF (373 aa).

A 2-C-methyl-D-erythritol 4-phosphate cytidylyltransferase region spans residues 1 to 213 (MSDLTLVLLG…CLQKPSATKR (213 aa)). The segment at 213 to 373 (RIGNGLDVHA…TLHYFDWSEI (161 aa)) is 2-C-methyl-D-erythritol 2,4-cyclodiphosphate synthase. Positions 219 and 221 each coordinate a divalent metal cation. 4-CDP-2-C-methyl-D-erythritol 2-phosphate contacts are provided by residues 219 to 221 (DVH) and 245 to 246 (HS). His-253 serves as a coordination point for a divalent metal cation. 4-CDP-2-C-methyl-D-erythritol 2-phosphate contacts are provided by residues 267–269 (DIG), 272–276 (FPDSD), 343–346 (TTTE), Phe-350, and Arg-353.

The protein in the N-terminal section; belongs to the IspD/TarI cytidylyltransferase family. IspD subfamily. This sequence in the C-terminal section; belongs to the IspF family. A divalent metal cation serves as cofactor.

The enzyme catalyses 2-C-methyl-D-erythritol 4-phosphate + CTP + H(+) = 4-CDP-2-C-methyl-D-erythritol + diphosphate. It catalyses the reaction 4-CDP-2-C-methyl-D-erythritol 2-phosphate = 2-C-methyl-D-erythritol 2,4-cyclic diphosphate + CMP. It participates in isoprenoid biosynthesis; isopentenyl diphosphate biosynthesis via DXP pathway; isopentenyl diphosphate from 1-deoxy-D-xylulose 5-phosphate: step 2/6. It functions in the pathway isoprenoid biosynthesis; isopentenyl diphosphate biosynthesis via DXP pathway; isopentenyl diphosphate from 1-deoxy-D-xylulose 5-phosphate: step 4/6. Bifunctional enzyme that catalyzes the formation of 4-diphosphocytidyl-2-C-methyl-D-erythritol from CTP and 2-C-methyl-D-erythritol 4-phosphate (MEP) (IspD), and catalyzes the conversion of 4-diphosphocytidyl-2-C-methyl-D-erythritol 2-phosphate (CDP-ME2P) to 2-C-methyl-D-erythritol 2,4-cyclodiphosphate (ME-CPP) with a corresponding release of cytidine 5-monophosphate (CMP) (IspF). The polypeptide is Bifunctional enzyme IspD/IspF (Nitratiruptor sp. (strain SB155-2)).